The following is a 530-amino-acid chain: AAA-ATPase At3g28510 (530 aa).

The helical transmembrane segment at 5-25 threads the bilayer; sequence GAIWGITGTTVTSFMFFWAIY. Position 250 to 257 (250 to 257) interacts with ATP; it reads GPPGTGKS. 2 disordered regions span residues 312–339 and 463–530; these read QRKK…KVDD and KARK…KSDS. Composition is skewed to basic and acidic residues over residues 326-339 and 463-511; these read EEKK…KVDD and KARK…KEEN. Residues 512–523 show a composition bias toward polar residues; that stretch reads GNVSQQNGNSID.

Belongs to the AAA ATPase family. BCS1 subfamily. Requires Mg(2+) as cofactor.

It is found in the membrane. The catalysed reaction is ATP + H2O = ADP + phosphate + H(+). The sequence is that of AAA-ATPase At3g28510 from Arabidopsis thaliana (Mouse-ear cress).